We begin with the raw amino-acid sequence, 165 residues long: SsrA-binding protein (165 aa).

A disordered region spans residues 141-165 (EDRRHAIAERETKREMDREISRRRR).

It belongs to the SmpB family.

The protein resides in the cytoplasm. In terms of biological role, required for rescue of stalled ribosomes mediated by trans-translation. Binds to transfer-messenger RNA (tmRNA), required for stable association of tmRNA with ribosomes. tmRNA and SmpB together mimic tRNA shape, replacing the anticodon stem-loop with SmpB. tmRNA is encoded by the ssrA gene; the 2 termini fold to resemble tRNA(Ala) and it encodes a 'tag peptide', a short internal open reading frame. During trans-translation Ala-aminoacylated tmRNA acts like a tRNA, entering the A-site of stalled ribosomes, displacing the stalled mRNA. The ribosome then switches to translate the ORF on the tmRNA; the nascent peptide is terminated with the 'tag peptide' encoded by the tmRNA and targeted for degradation. The ribosome is freed to recommence translation, which seems to be the essential function of trans-translation. This chain is SsrA-binding protein, found in Anaeromyxobacter sp. (strain Fw109-5).